A 90-amino-acid polypeptide reads, in one-letter code: DNA-binding protein HU-alpha (90 aa).

Belongs to the bacterial histone-like protein family. As to quaternary structure, heterodimer of an alpha and a beta chain.

In terms of biological role, histone-like DNA-binding protein which is capable of wrapping DNA to stabilize it, and thus to prevent its denaturation under extreme environmental conditions. This chain is DNA-binding protein HU-alpha (hupA), found in Vibrio cholerae serotype O1 (strain ATCC 39315 / El Tor Inaba N16961).